The chain runs to 75 residues: Pro-glucagon (75 aa).

It belongs to the glucagon family.

It is found in the secreted. Functionally, plays a key role in glucose metabolism and homeostasis. Regulates blood glucose by increasing gluconeogenesis and decreasing glycolysis. This is Pro-glucagon (gcg) from Amia calva (Bowfin).